The primary structure comprises 409 residues: MGMFTKLTKSYTDGNLIIQILIGITIGGILGFIAHKSSVEAAIVVNAASMLGNLFVGALKAVAPILVFILVASSIIIKEFGQANGLKNIIILYLVGTFLASLSAVVVSFIFPTTLVLQNTSNALASAPQSIIVVLKDLVFKMVDNPVHAISSGNYIGILTWAIGTGIALRHSSIETKKIFKDISEGITRIVKFIIKLAPFGIFGLVATSVAEAGFEAIGGYAKLLLVLVGTMLFVAFVVNAAIVYFVTKQNPYPLIMTCIKESAVTAFFTRSSAANIPVNMSLCKKLNLDEKLYSISIPLGATINMAGAAVTIAVLSLSAVNTLNIQVGFLDALLLSIIAAIGACGASGVAGGSLMLIPLACSLFGISNDIAMQVVAVGFIIGVVQDSIETALNSSTDVLFTAIASQKS.

Transmembrane regions (helical) follow at residues 14 to 34, 57 to 77, 89 to 109, 149 to 169, 190 to 210, 224 to 244, 296 to 316, 338 to 358, and 365 to 385; these read GNLI…GFIA, GALK…SIII, IIIL…VVSF, AISS…GIAL, IVKF…ATSV, LLLV…AAIV, ISIP…IAVL, IIAA…LMLI, and FGIS…IGVV.

The protein belongs to the dicarboxylate/amino acid:cation symporter (DAACS) (TC 2.A.23) family.

Its subcellular location is the cell inner membrane. It catalyses the reaction L-serine(in) + Na(+)(in) = L-serine(out) + Na(+)(out). The catalysed reaction is L-threonine(in) + Na(+)(in) = L-threonine(out) + Na(+)(out). In terms of biological role, involved in the import of serine and threonine into the cell, with the concomitant import of sodium (symport system). The protein is Serine/threonine transporter SstT of Campylobacter fetus subsp. fetus (strain 82-40).